Here is a 497-residue protein sequence, read N- to C-terminus: Serine/threonine-protein kinase cst-1 (497 aa).

The disordered stretch occupies residues M1–L27. Positions F35–I286 constitute a Protein kinase domain. ATP is bound by residues L41–V49 and K64. The active-site Proton acceptor is the D154. The tract at residues K367–E416 is disordered. Over residues A390–E416 the composition is skewed to polar residues. Positions F446 to K493 constitute an SARAH domain. A coiled-coil region spans residues R450 to I486.

It belongs to the protein kinase superfamily. STE Ser/Thr protein kinase family. STE20 subfamily. As to quaternary structure, interacts with rsf-1 (via SARAH domain); the interaction is required for the phosphorylation of cst-1. Requires Mg(2+) as cofactor. Post-translationally, proteolytically cleaved by caspase-3 during apoptosis which results in kinase activation. In terms of processing, phosphorylated. As to expression, widely expressed in epidermal cells.

The enzyme catalyses L-seryl-[protein] + ATP = O-phospho-L-seryl-[protein] + ADP + H(+). The catalysed reaction is L-threonyl-[protein] + ATP = O-phospho-L-threonyl-[protein] + ADP + H(+). Its function is as follows. Serine/threonine-protein kinase which extends lifespan and delays tissue aging, probably by activating daf-16. The protein is Serine/threonine-protein kinase cst-1 of Caenorhabditis elegans.